The following is a 272-amino-acid chain: Undecaprenyl-diphosphatase (272 aa).

Transmembrane regions (helical) follow at residues 39-59 (SGLT…FVYF), 87-107 (WMIV…EQPI), 113-133 (SSPL…GLTD), 145-165 (ITLG…VPGV), 188-208 (FSFL…GLHL), 220-240 (PMLV…AFLL), and 251-271 (FVWY…VGLL).

Belongs to the UppP family.

Its subcellular location is the cell inner membrane. The catalysed reaction is di-trans,octa-cis-undecaprenyl diphosphate + H2O = di-trans,octa-cis-undecaprenyl phosphate + phosphate + H(+). Catalyzes the dephosphorylation of undecaprenyl diphosphate (UPP). Confers resistance to bacitracin. The sequence is that of Undecaprenyl-diphosphatase from Trichlorobacter lovleyi (strain ATCC BAA-1151 / DSM 17278 / SZ) (Geobacter lovleyi).